We begin with the raw amino-acid sequence, 686 residues long: DNA ligase (686 aa).

NAD(+) contacts are provided by residues 33-37 (DSVYD), 82-83 (SL), and glutamate 122. Lysine 124 functions as the N6-AMP-lysine intermediate in the catalytic mechanism. NAD(+) is bound by residues arginine 145, glutamate 182, lysine 300, and lysine 324. Cysteine 418, cysteine 421, cysteine 436, and cysteine 441 together coordinate Zn(2+). The 87-residue stretch at 600-686 (AVSQILAGKK…PTVESGDLHP (87 aa)) folds into the BRCT domain.

It belongs to the NAD-dependent DNA ligase family. LigA subfamily. It depends on Mg(2+) as a cofactor. Mn(2+) is required as a cofactor.

It carries out the reaction NAD(+) + (deoxyribonucleotide)n-3'-hydroxyl + 5'-phospho-(deoxyribonucleotide)m = (deoxyribonucleotide)n+m + AMP + beta-nicotinamide D-nucleotide.. In terms of biological role, DNA ligase that catalyzes the formation of phosphodiester linkages between 5'-phosphoryl and 3'-hydroxyl groups in double-stranded DNA using NAD as a coenzyme and as the energy source for the reaction. It is essential for DNA replication and repair of damaged DNA. The polypeptide is DNA ligase (Synechococcus sp. (strain JA-2-3B'a(2-13)) (Cyanobacteria bacterium Yellowstone B-Prime)).